We begin with the raw amino-acid sequence, 147 residues long: Large ribosomal subunit protein bL9 (147 aa).

The tract at residues 44–63 (VKTLDAQKRSEDKRKEQEKL) is disordered. Basic and acidic residues predominate over residues 48–63 (DAQKRSEDKRKEQEKL).

This sequence belongs to the bacterial ribosomal protein bL9 family.

In terms of biological role, binds to the 23S rRNA. This chain is Large ribosomal subunit protein bL9, found in Brevibacillus brevis (strain 47 / JCM 6285 / NBRC 100599).